The primary structure comprises 157 residues: Increased recombination centers protein 23 (157 aa).

The Cytoplasmic segment spans residues 1–6 (MIEALE). The chain crosses the membrane as a helical span at residues 7-29 (IVLLLVIQSLQYICRTCIAFLLI). Residues 30–33 (PFLG) lie on the Lumenal side of the membrane. A helical membrane pass occupies residues 34–56 (LYAFDLFLYVYRMILYLSQMFNY). The Cytoplasmic segment spans residues 57–157 (KRKLGRSKTN…EEGYYIAGSI (101 aa)).

Its subcellular location is the endoplasmic reticulum membrane. Is probably involved in a pathway contributing to genomic integrity. The sequence is that of Increased recombination centers protein 23 (IRC23) from Saccharomyces cerevisiae (strain ATCC 204508 / S288c) (Baker's yeast).